A 1033-amino-acid chain; its full sequence is MEVGGGSEECCVKVAVHVRPLIGDEKVQGCKDCVTVIPGKPQVQIGTHSFTFDHVYGSTSSPSWMFEECIVPLVDGLFQGYNATVLAYGQTGSGKTYTMGTGFKGGSQTGIIPQVMNALFSKIENLKHQIEFQLHVSFIEILKEEVRDLLDPTFLNKSDTASANTGKVNVPGKPPIQIRESSDGVITLAGSTEVSVSTLKEMGACLEQGSLSRATGSTNMNNQSSRSHAIFTITLEQMRKLNPVSGDGNPNDSMSEEYLCAKLHLVDLAGSERAKRTGSDGMRFKEGVHINKGLLALGNVISALGDEKKRKEGVHVPYRDSKLTRLLQDSLGGNSRTVMIACISPADINAEETLNTLKYANRARNIQNKPVVNRDPMSNEILKMRQQLEYLQAELCARGGSGEVQVLNERIAWLEAANEDLCRELYEYRSRCTIVEQREMDAQDGSPCSVESDGLKRNLRSRESRDNQIVETMIGGDSREIEEGAAKEWEHMLLQNTMDKELHELNRQLEEKESEMKVFGGHTVALKQHFGKKIQELEEEKRAVQQERDRLLAEIENLSAGSEGQALKVHDIHAQKLKSLEAQIMDLKKKQENQVQLLKKKQKSDEAAKRLQDEIQYIKAQKVQLQHRIKQEAEQFRQWKASREKELLQLRKEGRRNEYERHKLQALNQRQKLVLQRKTEEAAMATKRLKELLEARKSAARDNLAIANGNGTNGKINEKGLQRWLDHELEVMVNVHEVRFEYEKQSQVRAALAEELAVLKQVDELDSKGPSPSRGKNGCARGSSLSPNARVARISSLEHMLGISSNSLVAMASQLSEAEERERAFTNRGRWNQLRSMGDAKNLLQYMFNSLGDSRYQLWEKGIEIREMKEQLKELVGLLRQSELQRKEVENELKLREQAVAIALATSATGNSPISLKHIDDDVKSSSSPMSVPAQKQLKYSPGIVNGPARESAAFIGQTRKMIPLGQLPMKNLVANGQAGNGKLWRWKRSHHQWLVQFKWKWQKPWRLSEWIRHSDETIIRARPRSQVLTYRV.

One can recognise a Kinesin motor domain in the interval 11–366; sequence CVKVAVHVRP…LKYANRARNI (356 aa). An ATP-binding site is contributed by 89-96; sequence GQTGSGKT. Residues 443 to 462 are disordered; that stretch reads QDGSPCSVESDGLKRNLRSR. The segment covering 453 to 462 has biased composition (basic and acidic residues); that stretch reads DGLKRNLRSR. Residues 525–638 adopt a coiled-coil conformation; sequence ALKQHFGKKI…IKQEAEQFRQ (114 aa). Residues 763-785 form a disordered region; it reads DELDSKGPSPSRGKNGCARGSSL. Residues 863 to 895 are a coiled coil; it reads IEIREMKEQLKELVGLLRQSELQRKEVENELKL.

The protein belongs to the TRAFAC class myosin-kinesin ATPase superfamily. Kinesin family. KIN-4 subfamily. As to quaternary structure, homodimer. Expressed in cotton fibers.

The protein localises to the cytoplasm. Functionally, kinesin-like motor protein involved in the control of the oriented deposition of cellulose microfibrils. This Gossypium hirsutum (Upland cotton) protein is Kinesin-like protein KIN-4A.